A 306-amino-acid polypeptide reads, in one-letter code: Bifunctional protein FolD (306 aa).

NADP(+)-binding positions include 169–171 (GRS), serine 194, and isoleucine 235.

This sequence belongs to the tetrahydrofolate dehydrogenase/cyclohydrolase family. As to quaternary structure, homodimer.

It catalyses the reaction (6R)-5,10-methylene-5,6,7,8-tetrahydrofolate + NADP(+) = (6R)-5,10-methenyltetrahydrofolate + NADPH. The enzyme catalyses (6R)-5,10-methenyltetrahydrofolate + H2O = (6R)-10-formyltetrahydrofolate + H(+). Its pathway is one-carbon metabolism; tetrahydrofolate interconversion. In terms of biological role, catalyzes the oxidation of 5,10-methylenetetrahydrofolate to 5,10-methenyltetrahydrofolate and then the hydrolysis of 5,10-methenyltetrahydrofolate to 10-formyltetrahydrofolate. This Thermosynechococcus vestitus (strain NIES-2133 / IAM M-273 / BP-1) protein is Bifunctional protein FolD.